The primary structure comprises 693 residues: Pentatricopeptide repeat-containing protein At2g19280 (693 aa).

PPR repeat units follow at residues 200-234 (LETVFSILIDCCIRERKVNMALKLTYKVDQFGIFP), 235-269 (SRGVCISLLKEILRVHGLELAREFVEHMLSRGRHL), 270-304 (NAAVLSLFIRKYCSDGYFDKGWELLMGMKHYGIRP), 305-339 (DIVAFTVFIDKLCKAGFLKEATSVLFKLKLFGISQ), 340-370 (DSVSVSSVIDGFCKVGKPEEAIKLIHSFRLR), 372-406 (NIFVYSSFLSNICSTGDMLRASTIFQEIFELGLLP), 407-441 (DCVCYTTMIDGYCNLGRTDKAFQYFGALLKSGNPP), 442-476 (SLTTSTILIGACSRFGSISDAESVFRNMKTEGLKL), 477-511 (DVVTYNNLMHGYGKTHQLNKVFELIDEMRSAGISP), 512-546 (DVATYNILIHSMVVRGYIDEANEIISELIRRGFVP), 547-581 (STLAFTDVIGGFSKRGDFQEAFILWFYMADLRMKP), 582-616 (DVVTCSALLHGYCKAQRMEKAIVLFNKLLDAGLKP), and 617-651 (DVVLYNTLIHGYCSVGDIEKACELIGLMVQRGMLP).

The protein belongs to the PPR family. P subfamily.

The polypeptide is Pentatricopeptide repeat-containing protein At2g19280 (Arabidopsis thaliana (Mouse-ear cress)).